A 216-amino-acid chain; its full sequence is MAEEPVVIGDPAPRTRKWPIVVGVVVVVLIAAGAGFWVWHEQPSFCAAICHTPMDEYLETYEQEAGTAGVDKWGNEVANTNAMLAVSHKAQGKDCMACHVPTLSEQMSEGMNWVTGNYVYPLEERDTEMLTEARGVDADEFCLNESCHNLTRDDLIKATSDMEFNPHQPQHGEIECSECHKAHRASVMYCTQCHSEAEVPEGWLTVAEANKLSTAA.

The chain crosses the membrane as a helical span at residues 18–38 (WPIVVGVVVVVLIAAGAGFWV). The heme site is built by cysteine 46, cysteine 50, histidine 51, cysteine 95, cysteine 98, histidine 99, cysteine 142, cysteine 147, histidine 148, cysteine 176, cysteine 179, histidine 180, cysteine 190, cysteine 193, and histidine 194.

Belongs to the multiheme cytochrome c family. In terms of assembly, may form a membrane-associated complex with Cgr2. Post-translationally, binds 5 heme groups per subunit.

Its subcellular location is the cell membrane. Its function is as follows. Probably transfers electrons from a membrane-associated electron donor (e.g. the membrane quinone pool) to the [4Fe-4S] cluster of the Cgr2 reductase via its covalently bound heme groups. The polypeptide is Cytochrome c-type protein Cgr1 (Eggerthella lenta (strain ATCC 25559 / DSM 2243 / CCUG 17323 / JCM 9979 / KCTC 3265 / NCTC 11813 / VPI 0255 / 1899 B) (Eubacterium lentum)).